The following is a 234-amino-acid chain: Uridylate kinase (234 aa).

9–12 provides a ligand contact to ATP; the sequence is KLSG. Gly51 serves as a coordination point for UMP. Positions 52 and 56 each coordinate ATP. Residues Asp71 and 132-139 contribute to the UMP site; that span reads CGNPFFTT. The ATP site is built by Thr159, Tyr165, and Asp168.

Belongs to the UMP kinase family. In terms of assembly, homohexamer.

The protein localises to the cytoplasm. It catalyses the reaction UMP + ATP = UDP + ADP. It functions in the pathway pyrimidine metabolism; CTP biosynthesis via de novo pathway; UDP from UMP (UMPK route): step 1/1. Its activity is regulated as follows. Inhibited by UTP. Functionally, catalyzes the reversible phosphorylation of UMP to UDP. The polypeptide is Uridylate kinase (Prochlorococcus marinus (strain AS9601)).